We begin with the raw amino-acid sequence, 649 residues long: MKKEPVHILPLYLPCLLMFLLSSLRQITGDARARAVKVTCSPLLEHNETAYVPNFVATMEKISTQVQTSGFGVALTGTGPDANYGLAQCYGDLPLNDCVLCYAEARTMLPQCYPQNGGRIFLDGCFMRAENYSFYNEYKGPEDSIVCGNTTRKNKTFGDAVRQGLRNAVTEASGTGGYARASAKAGESESESAFVLANCWRTLSPDSCKQCLENASASVVKGCLPWSEGRALHTGCFLRYSDQDFLNKIPRNGRSRGSVVVIVVSVLSSVVVFMIGVAVSVYICKRRTIKRKRRGSKDVEKMAKTLKDSSLNFKYSTLEKATGSFDNANKLGQGGFGTVYKGVLPDGRDIAVKRLFFNNRHRATDFYNEVNMISTVEHKNLVRLLGCSCSGPESLLVYEYLQNKSLDRFIFDVNRGKTLDWQRRYTIIVGTAEGLVYLHEQSSVKIIHRDIKASNILLDSKLQAKIADFGLARSFQDDKSHISTAIAGTLGYMAPEYLAHGQLTEMVDVYSFGVLVLEIVTGKQNTKSKMSDYSDSLITEAWKHFQSGELEKIYDPNLDWKSQYDSHIIKKEIARVVQIGLLCTQEIPSLRPPMSKLLHMLKNKEEVLPLPSNPPFMDERVMELRDGSDGDSAGCASLATVSQSSFYGR.

An N-terminal signal peptide occupies residues 1–29 (MKKEPVHILPLYLPCLLMFLLSSLRQITG). Topologically, residues 30–258 (DARARAVKVT…IPRNGRSRGS (229 aa)) are extracellular. Gnk2-homologous domains lie at 33 to 134 (ARAV…NYSF) and 139 to 245 (KGPE…DQDF). Asn-47, Asn-131, Asn-149, Asn-154, and Asn-214 each carry an N-linked (GlcNAc...) asparagine glycan. The helical transmembrane segment at 259-279 (VVVIVVSVLSSVVVFMIGVAV) threads the bilayer. The Cytoplasmic portion of the chain corresponds to 280 to 649 (SVYICKRRTI…TVSQSSFYGR (370 aa)). Residues 325-608 (FDNANKLGQG…HMLKNKEEVL (284 aa)) enclose the Protein kinase domain. Residues 331 to 339 (LGQGGFGTV) and Lys-353 each bind ATP. Phosphotyrosine is present on Tyr-398. Asp-450 acts as the Proton acceptor in catalysis. Residues Ser-454 and Ser-483 each carry the phosphoserine modification. Residues Thr-484 and Thr-489 each carry the phosphothreonine modification. Tyr-497 is modified (phosphotyrosine).

Belongs to the protein kinase superfamily. Ser/Thr protein kinase family. CRK subfamily.

Its subcellular location is the membrane. The catalysed reaction is L-seryl-[protein] + ATP = O-phospho-L-seryl-[protein] + ADP + H(+). It carries out the reaction L-threonyl-[protein] + ATP = O-phospho-L-threonyl-[protein] + ADP + H(+). The protein is Cysteine-rich receptor-like protein kinase 2 (CRK2) of Arabidopsis thaliana (Mouse-ear cress).